The primary structure comprises 166 residues: Zinc finger CCHC domain-containing protein 13 (166 aa).

Residues 4-21 form a CCHC-type 1; degenerate zinc finger; the sequence is KDFFACGHSGHWARGCPR. The CCHC-type 2; degenerate zinc-finger motif lies at 45–62; it reads YTCYCCGESGRNAKNCVL. CCHC-type zinc fingers lie at residues 65-82, 89-106, 110-127, and 128-145; these read NICYNCGRSGHIAKDCKD, QHCYTCGRLGHLARDCDR, QKCYSCGKLGHIQKDCAQ, and VKCYRCGEIGHVAINCSK.

The polypeptide is Zinc finger CCHC domain-containing protein 13 (ZCCHC13) (Homo sapiens (Human)).